Reading from the N-terminus, the 1954-residue chain is MGNSYAGQLKSTRFEEVLHNSIEASLRSNTLVPRPIFSQLYLEAEQQLSSLEGGSRADNEEEEEDGEGGLEPSSPPNAYQLPPPPEGCCTTDGFCQAGKDLRLVSISSEPIEVPAGFLLVGAKSPSLPDHLLVCAVDKRFLPDDNGHNALLGFSGNCVGCGKKGFCYFTEFSNHINLKLTTQPKKQKHLKYYLVRNAQGALTKGPLICWKGSEFRGRQNSTNTCSSSLFPPLESSGSLAAFPTEPVPGTNPSVPVGAQQAGPASDHPSVTTATGPAVFNGKDSPKHPQLVKSSLSALPRPSALGILPNSGPPKKRHKGWSPESKSTTDGGFIQGGGNRAKHEGTSIPCVPQAGLVGPASVTFPVVASGEPVSVPDNLLKICKAKPVIFKGHGNFPYLCGNLNDVVVSPLLYTCYQNSQSLARAYEQHGASTMQPISEETQLLLTVYYLVQLAADQVPLMEDLEQIFLRSWRESHLTEIRQYQQAPPQPFPPATSTAAPVTSAQLPWLAGLAASSCNDSVHVIECAYSLAEGLSEMFRLLIEGKLSKTNYVVIICACRNAAIDSCIAVTGKYQARILSESLLSPAEYQREVHYELVTGKVDSLGTFFSSLCPEGDIDILLDKFHQENQGHVSSSFTASSTKKTAVLDASGVPVCTSYHQEPRGVRPFQLAVAQKLLSHVCSIADSSTQNLDLGSFEKVDFLICIPPSEVTYQQTVFHVWHSGVLLELGLEKEPVTKQRAEQHVLKLDTEAQARFKAFLQNSFQNPHTLFVLIHDHAHWDLVSSAVHNIYSQSDPSVGLVDRLLNCREVKEAPNIVTLHVTSFPYALQTQHTLISPYNEIHWPISFSNGVDLYHESKKYFGLSEFIDSTLSGHSLPLLRYDSSFEAMVTALGKRFPRLHSAVIRTFVLVQHYAAAMMAVSGLPQMKNHTSVETLEITQNLLNSPKQCPCGHGLMVLLRVPCSPLAAVAYERLAHVRARLALEEHFEIILGHPSSGITVGKHFVKQLKMWQKIEDAEWRPQTYLELEGLPCILIFSGMDPHGESLPRSLRYCDLRLINSSCLVRTALEQELGLAAYFVSNDIPLEKGPKNEALESDGEKLSSTDEDEEAGTEGCFEAGSTSEQRGPVKRERSHSHDSASSSLSSRASGSVLYGESLAQPSGPPQGELTRSPPSCGPAEEGRAPGEIQRLRVSQGSTVISRHSPGLVPQPDSSLRTGRRSLQVPAAPSSQLSSSSGSSSTCAVPTANVLVLQASQCSMAKACRQPPIVFLPKLVYDMLLSTDSSGLPKSASLLPSPSVMWTSSFRPLLSKMMTSTEQSLYYRQWTVPRPSHMDYGNRAEGRVDSFHPRRLLLSGPPQIGKTGAYLQFLSILSRMLIRLTEVDVYDEEEINTSFREESEWRYLQLADPWPDLELFQKMPFDYIIHDPKYEDASLICSHPQTIKSEDRGMSRKPEDLYVRRQTARMRLSKYAAYNTYHHCEQCQQYMGFHPHYQLSESTLHVFAFSCSMLGEEVQLHFIIPKSKEHHFVFSQPGGQLESMRLPLVTDKSHEHIKSPTFTPTTGRHEHGLFNLYHAMDGANHLHVLVVKEYEMAIYKKYWPNHIMLVLPSIFNSAGVGAAHFLIKELCYHNLELERNRQEELGVKPQDVWPFIVIADDSCVMWNVADVDCAGERSREFSWSERNVSLKYIMLHIEASPNITHYALLGMRKWASKTRGREVQEPFSRCHVHDFIILNVDLTQNVQYNQNRFTCDDVDFNLRVHSAGLLLCRFNRFSVMKKQIAVGGHRSFHITSKVSDSSVAIVPSQYICAPDSKHTFLAAPAQLLLEKFLQYHSHRFFPLSLKNHSHPVLSVDCYLNLGPQISVCYVSSRPHSLNISCSDMVFSGLLLYLCDSFVGASFLKKFHFLKGATLCVICQDRNSLRQTVVRLELEDEWQFRLRDEFQTANAKEDRPLFFLTARHI.

Disordered stretches follow at residues 48–83 (LSSL…QLPP), 238–342 (LAAF…AKHE), and 1083–1235 (KGPK…GSSS). Positions 59–68 (NEEEEEDGEG) are enriched in acidic residues. The span at 292-303 (SSLSALPRPSAL) shows a compositional bias: low complexity. Basic and acidic residues-rich tracts occupy residues 1083 to 1099 (KGPK…KLSS) and 1122 to 1133 (GPVKRERSHSHD). The segment covering 1134–1146 (SASSSLSSRASGS) has biased composition (low complexity). Polar residues predominate over residues 1187 to 1196 (RVSQGSTVIS). The segment covering 1224 to 1235 (SSQLSSSSGSSS) has biased composition (low complexity). Residues 1873–1893 (DMVFSGLLLYLCDSFVGASFL) form a helical membrane-spanning segment.

It belongs to the GREB1 family.

The protein localises to the membrane. May play a role in estrogen-stimulated cell proliferation. The chain is Protein GREB1 (Greb1) from Mus musculus (Mouse).